Consider the following 126-residue polypeptide: Desulfoferrodoxin (126 aa).

The Fe cation site is built by C10, C13, C29, C30, H49, H69, H75, C116, and H119.

Belongs to the desulfoferrodoxin family. In terms of assembly, homodimer. Fe(3+) serves as cofactor. The cofactor is Cu(2+).

It catalyses the reaction reduced [rubredoxin] + superoxide + 2 H(+) = oxidized [rubredoxin] + H2O2. Its function is as follows. Catalyzes the one-electron reduction of superoxide anion radical to hydrogen peroxide at a nonheme ferrous iron center. Plays a fundamental role in case of oxidative stress via its superoxide detoxification activity. This Desulfarculus baarsii (strain ATCC 33931 / DSM 2075 / LMG 7858 / VKM B-1802 / 2st14) protein is Desulfoferrodoxin (dfx).